Here is a 359-residue protein sequence, read N- to C-terminus: Protein RecA (359 aa).

64–71 contributes to the ATP binding site; sequence GHESSGKT. The tract at residues 329 to 359 is disordered; it reads KYSNKDSNDSPKEGSKIKTKVNPAVTQDELI. Residues 331 to 344 are compositionally biased toward basic and acidic residues; sequence SNKDSNDSPKEGSK.

The protein belongs to the RecA family.

Its subcellular location is the cytoplasm. Can catalyze the hydrolysis of ATP in the presence of single-stranded DNA, the ATP-dependent uptake of single-stranded DNA by duplex DNA, and the ATP-dependent hybridization of homologous single-stranded DNAs. It interacts with LexA causing its activation and leading to its autocatalytic cleavage. This Francisella tularensis subsp. tularensis (strain FSC 198) protein is Protein RecA.